The sequence spans 344 residues: N-acetyl-gamma-glutamyl-phosphate reductase (344 aa).

The active site involves Cys-150.

Belongs to the NAGSA dehydrogenase family. Type 1 subfamily.

It is found in the cytoplasm. It carries out the reaction N-acetyl-L-glutamate 5-semialdehyde + phosphate + NADP(+) = N-acetyl-L-glutamyl 5-phosphate + NADPH + H(+). It participates in amino-acid biosynthesis; L-arginine biosynthesis; N(2)-acetyl-L-ornithine from L-glutamate: step 3/4. Functionally, catalyzes the NADPH-dependent reduction of N-acetyl-5-glutamyl phosphate to yield N-acetyl-L-glutamate 5-semialdehyde. The polypeptide is N-acetyl-gamma-glutamyl-phosphate reductase (Ectopseudomonas mendocina (strain ymp) (Pseudomonas mendocina)).